A 95-amino-acid polypeptide reads, in one-letter code: Co-chaperonin GroES (95 aa).

It belongs to the GroES chaperonin family. As to quaternary structure, heptamer of 7 subunits arranged in a ring. Interacts with the chaperonin GroEL.

The protein resides in the cytoplasm. Its function is as follows. Together with the chaperonin GroEL, plays an essential role in assisting protein folding. The GroEL-GroES system forms a nano-cage that allows encapsulation of the non-native substrate proteins and provides a physical environment optimized to promote and accelerate protein folding. GroES binds to the apical surface of the GroEL ring, thereby capping the opening of the GroEL channel. In Cereibacter sphaeroides (strain KD131 / KCTC 12085) (Rhodobacter sphaeroides), this protein is Co-chaperonin GroES.